The chain runs to 419 residues: L-rhamnose isomerase (419 aa).

3 residues coordinate Mn(2+): His262, Asp294, and Asp296.

It belongs to the rhamnose isomerase family. In terms of assembly, homotetramer. The cofactor is Mn(2+).

It localises to the cytoplasm. The enzyme catalyses L-rhamnopyranose = L-rhamnulose. It functions in the pathway carbohydrate degradation; L-rhamnose degradation; glycerone phosphate from L-rhamnose: step 1/3. In terms of biological role, catalyzes the interconversion of L-rhamnose and L-rhamnulose. The polypeptide is L-rhamnose isomerase (Salmonella newport (strain SL254)).